Consider the following 361-residue polypeptide: MTPTLRRKLEALAERREELQHLLSDPEVVSNNDKFRSLSRELSQLEPVALAMQEEARAKADLSAAEAMRNDPEMRELAEEEILAAQARLDELDAQLALLLVPRDPRDEGNLFLEVRAGTGGDEAAIFAGDLFRMYARYAERQGWKVEIESDSPGEHGGYKEVVARVVGRGAYSRLKFESGTHRVQRVPATESQGRIHTSAATVAIIPEADDVEEIVINPADLKVDTFRSSGAGGQHVNKTESAIRITHVPSGVVVECQTERSQHANRDKAMKRLKAQLVEAERSKAAAAKAQTRKLQVGSGDRSQRIRTYSFPQGRITDHRVEGLTLYDLPNIIEGDLDALIARLLHEHQADELARLSEGT.

N5-methylglutamine is present on Gln235.

Belongs to the prokaryotic/mitochondrial release factor family. Post-translationally, methylated by PrmC. Methylation increases the termination efficiency of RF1.

The protein resides in the cytoplasm. Peptide chain release factor 1 directs the termination of translation in response to the peptide chain termination codons UAG and UAA. The chain is Peptide chain release factor 1 from Xanthomonas campestris pv. campestris (strain 8004).